The sequence spans 345 residues: Phosphoribosylformylglycinamidine cyclo-ligase (345 aa).

Belongs to the AIR synthase family.

The protein resides in the cytoplasm. It catalyses the reaction 2-formamido-N(1)-(5-O-phospho-beta-D-ribosyl)acetamidine + ATP = 5-amino-1-(5-phospho-beta-D-ribosyl)imidazole + ADP + phosphate + H(+). The protein operates within purine metabolism; IMP biosynthesis via de novo pathway; 5-amino-1-(5-phospho-D-ribosyl)imidazole from N(2)-formyl-N(1)-(5-phospho-D-ribosyl)glycinamide: step 2/2. The sequence is that of Phosphoribosylformylglycinamidine cyclo-ligase from Klebsiella pneumoniae (strain 342).